The chain runs to 508 residues: Endoglucanase 6 (508 aa).

A signal peptide spans 1–33 (MLAASLRVEAVAVVAAAVLVLLLSPAAVVVVAG). The active-site Nucleophile is the Asp-89. Active-site residues include His-419, Asp-471, and Glu-480.

This sequence belongs to the glycosyl hydrolase 9 (cellulase E) family.

Its subcellular location is the secreted. The enzyme catalyses Endohydrolysis of (1-&gt;4)-beta-D-glucosidic linkages in cellulose, lichenin and cereal beta-D-glucans.. This is Endoglucanase 6 from Oryza sativa subsp. japonica (Rice).